The sequence spans 378 residues: Protein SLG1 (378 aa).

Residues 1–21 (MRPNKTSLLLALLSILSQANA) form the signal peptide. The region spanning 22 to 110 (YEYVNCFSSL…EDAYSVYQLD (89 aa)) is the WSC domain. Residues 22 to 264 (YEYVNCFSSL…THKKKANVGA (243 aa)) are Extracellular-facing. N-linked (GlcNAc...) asparagine glycosylation occurs at Asn65. Disordered regions lie at residues 115–201 (SNSI…TSST) and 236–256 (QNSG…SKTH). The span at 236-253 (QNSGSATGTAGSDSTSGS) shows a compositional bias: low complexity. A helical transmembrane segment spans residues 265–285 (IVGGVVGGVVGAVAIALCILL). Residues 286 to 378 (IVRHINMKRE…LTVVNPDEAD (93 aa)) are Cytoplasmic-facing. Positions 318–378 (ASSFSSNHGP…LTVVNPDEAD (61 aa)) are disordered. The span at 319–331 (SSFSSNHGPSSGS) shows a compositional bias: low complexity. Phosphoserine is present on residues Ser331 and Ser353.

Glycosylated. Phosphorylated. Phosphorylation serves a negative regulatory role.

It localises to the cell membrane. Its function is as follows. Plays a role during G1 to regulate entering or exiting the cell cycle. Involved in stress responses. Has a role in cell wall integrity signaling. Activates ROM1 or ROM2 catalyzed guanine nucleotide exchange toward RHO1. Important regulator of the actin cytoskeleton rearrangements in conditions of cell wall expansion and membrane stretching. Specifically required for the actin reorganization induced by hypo-osmotic shock. Multicopy suppressor of 1,3-beta-glucan synthase (GS). Activates GS upstream of RHO1. Acts positively on the PKC1-MAPK pathway. Activates transiently SLT2 during alkaline stress, which leads to an increase in the expression of several specific genes. This is Protein SLG1 (SLG1) from Saccharomyces cerevisiae (strain ATCC 204508 / S288c) (Baker's yeast).